Here is a 192-residue protein sequence, read N- to C-terminus: MIVLVNNRDSFVWNLAEYASLFDRVKVVPNTITVGELRRLDPDGVIISPGPGHPLERREVGNSPEIVLEAGVPILGVCLGHQIIATAFGGKVGRVKPRHGKASPVKHDGKGVLRGIKNPLTAGRYHSLAVLEVPREFDVSAVSLDDNVVMGIRHRKLPIEGLQFHPESVLTEWERKEGLRIIKNFVEMSRNG.

Residues 1 to 192 form the Glutamine amidotransferase type-1 domain; sequence MIVLVNNRDS…KNFVEMSRNG (192 aa). 50–52 is an L-glutamine binding site; sequence GPG. The active-site Nucleophile; for GATase activity is the cysteine 78. Residues glutamine 82 and 127 to 128 contribute to the L-glutamine site; that span reads SL. Catalysis depends on for GATase activity residues histidine 165 and glutamate 167.

Heterotetramer consisting of two non-identical subunits: a beta subunit (TrpG) and a large alpha subunit (TrpE).

The enzyme catalyses chorismate + L-glutamine = anthranilate + pyruvate + L-glutamate + H(+). It participates in amino-acid biosynthesis; L-tryptophan biosynthesis; L-tryptophan from chorismate: step 1/5. Part of a heterotetrameric complex that catalyzes the two-step biosynthesis of anthranilate, an intermediate in the biosynthesis of L-tryptophan. In the first step, the glutamine-binding beta subunit (TrpG) of anthranilate synthase (AS) provides the glutamine amidotransferase activity which generates ammonia as a substrate that, along with chorismate, is used in the second step, catalyzed by the large alpha subunit of AS (TrpE) to produce anthranilate. In the absence of TrpG, TrpE can synthesize anthranilate directly from chorismate and high concentrations of ammonia. In Thermococcus kodakarensis (strain ATCC BAA-918 / JCM 12380 / KOD1) (Pyrococcus kodakaraensis (strain KOD1)), this protein is Anthranilate synthase component 2 (trpG).